The following is an 81-amino-acid chain: MSHSVKIYNTCIGCTQCVRACPTDVLEMVPWDGCKAGQIASSPRTEDCVGCKRCESACPTDFLSVRVYLGSETSRSMGLAY.

2 4Fe-4S ferredoxin-type domains span residues 2–31 (SHSVKIYNTCIGCTQCVRACPTDVLEMVPW) and 37–68 (GQIASSPRTEDCVGCKRCESACPTDFLSVRVY). Residues Cys-11, Cys-14, Cys-17, Cys-21, Cys-48, Cys-51, Cys-54, and Cys-58 each coordinate [4Fe-4S] cluster.

As to quaternary structure, the eukaryotic PSI reaction center is composed of at least 11 subunits. It depends on [4Fe-4S] cluster as a cofactor.

It is found in the plastid. The protein resides in the chloroplast thylakoid membrane. The catalysed reaction is reduced [plastocyanin] + hnu + oxidized [2Fe-2S]-[ferredoxin] = oxidized [plastocyanin] + reduced [2Fe-2S]-[ferredoxin]. In terms of biological role, apoprotein for the two 4Fe-4S centers FA and FB of photosystem I (PSI); essential for photochemical activity. FB is the terminal electron acceptor of PSI, donating electrons to ferredoxin. The C-terminus interacts with PsaA/B/D and helps assemble the protein into the PSI complex. Required for binding of PsaD and PsaE to PSI. PSI is a plastocyanin/cytochrome c6-ferredoxin oxidoreductase, converting photonic excitation into a charge separation, which transfers an electron from the donor P700 chlorophyll pair to the spectroscopically characterized acceptors A0, A1, FX, FA and FB in turn. This is Photosystem I iron-sulfur center from Euglena gracilis.